Here is a 172-residue protein sequence, read N- to C-terminus: Transcriptional repressor NrdR (172 aa).

Residues 3 to 34 (CPFCGEADTKVIDSRLVAEGDQVRRRRECLSC) fold into a zinc finger. The region spanning 49-139 (PRVVKQDGTR…VYRSFQDINE (91 aa)) is the ATP-cone domain.

Belongs to the NrdR family. It depends on Zn(2+) as a cofactor.

In terms of biological role, negatively regulates transcription of bacterial ribonucleotide reductase nrd genes and operons by binding to NrdR-boxes. This Marinobacter nauticus (strain ATCC 700491 / DSM 11845 / VT8) (Marinobacter aquaeolei) protein is Transcriptional repressor NrdR.